Here is a 134-residue protein sequence, read N- to C-terminus: Putative pre-16S rRNA nuclease (134 aa).

It belongs to the YqgF nuclease family.

It is found in the cytoplasm. Its function is as follows. Could be a nuclease involved in processing of the 5'-end of pre-16S rRNA. The chain is Putative pre-16S rRNA nuclease from Helicobacter pylori (strain Shi470).